A 505-amino-acid polypeptide reads, in one-letter code: Glutamate--tRNA ligase (505 aa).

The 'HIGH' region motif lies at 12 to 22 (PSPTGALHIGG). The 'KMSKS' region signature appears at 260 to 264 (KLSKR). ATP is bound at residue Lys263.

It belongs to the class-I aminoacyl-tRNA synthetase family. Glutamate--tRNA ligase type 1 subfamily. As to quaternary structure, monomer.

Its subcellular location is the cytoplasm. The enzyme catalyses tRNA(Glu) + L-glutamate + ATP = L-glutamyl-tRNA(Glu) + AMP + diphosphate. Its function is as follows. Catalyzes the attachment of glutamate to tRNA(Glu) in a two-step reaction: glutamate is first activated by ATP to form Glu-AMP and then transferred to the acceptor end of tRNA(Glu). The polypeptide is Glutamate--tRNA ligase (Bacteroides fragilis (strain ATCC 25285 / DSM 2151 / CCUG 4856 / JCM 11019 / LMG 10263 / NCTC 9343 / Onslow / VPI 2553 / EN-2)).